A 177-amino-acid polypeptide reads, in one-letter code: Translation initiation factor IF-3 (177 aa).

It belongs to the IF-3 family. In terms of assembly, monomer.

The protein localises to the cytoplasm. In terms of biological role, IF-3 binds to the 30S ribosomal subunit and shifts the equilibrium between 70S ribosomes and their 50S and 30S subunits in favor of the free subunits, thus enhancing the availability of 30S subunits on which protein synthesis initiation begins. This is Translation initiation factor IF-3 from Nostoc sp. (strain PCC 7120 / SAG 25.82 / UTEX 2576).